Here is a 103-residue protein sequence, read N- to C-terminus: Small ribosomal subunit protein uS10c (103 aa).

This sequence belongs to the universal ribosomal protein uS10 family. In terms of assembly, part of the 30S ribosomal subunit.

The protein localises to the plastid. Its subcellular location is the chloroplast. Involved in the binding of tRNA to the ribosomes. The polypeptide is Small ribosomal subunit protein uS10c (Emiliania huxleyi (Coccolithophore)).